An 85-amino-acid chain; its full sequence is Large ribosomal subunit protein bL31B (85 aa).

Belongs to the bacterial ribosomal protein bL31 family. Type B subfamily. Part of the 50S ribosomal subunit.

The chain is Large ribosomal subunit protein bL31B from Pseudarthrobacter chlorophenolicus (strain ATCC 700700 / DSM 12829 / CIP 107037 / JCM 12360 / KCTC 9906 / NCIMB 13794 / A6) (Arthrobacter chlorophenolicus).